We begin with the raw amino-acid sequence, 338 residues long: Tetraacyldisaccharide 4'-kinase (338 aa).

ATP is bound at residue 51 to 58 (HVGGAGKT).

The protein belongs to the LpxK family.

The enzyme catalyses a lipid A disaccharide + ATP = a lipid IVA + ADP + H(+). It functions in the pathway glycolipid biosynthesis; lipid IV(A) biosynthesis; lipid IV(A) from (3R)-3-hydroxytetradecanoyl-[acyl-carrier-protein] and UDP-N-acetyl-alpha-D-glucosamine: step 6/6. Functionally, transfers the gamma-phosphate of ATP to the 4'-position of a tetraacyldisaccharide 1-phosphate intermediate (termed DS-1-P) to form tetraacyldisaccharide 1,4'-bis-phosphate (lipid IVA). This chain is Tetraacyldisaccharide 4'-kinase, found in Bradyrhizobium diazoefficiens (strain JCM 10833 / BCRC 13528 / IAM 13628 / NBRC 14792 / USDA 110).